The following is a 145-amino-acid chain: MNLHELKYNEGARKEKHRVGRGHAAGKGKQAGKGQSGQLKRTGSKPGFEGGQNPWYRRVPKRGFNNVNHIEYQVISIETLDAAFPDKAEINPEVLHEKRIARNKNLPIKLLANGATKKKFTIKLNAASKKAIELIEKAGGKVEVI.

The segment covering Met-1 to Arg-13 has biased composition (basic and acidic residues). Residues Met-1–Tyr-56 form a disordered region. A compositionally biased stretch (basic residues) spans Lys-14–Gly-26.

Belongs to the universal ribosomal protein uL15 family. Part of the 50S ribosomal subunit.

Functionally, binds to the 23S rRNA. The protein is Large ribosomal subunit protein uL15 of Mycoplasma mobile (strain ATCC 43663 / 163K / NCTC 11711) (Mesomycoplasma mobile).